A 421-amino-acid polypeptide reads, in one-letter code: RNase J-like protein (421 aa).

The Zn(2+) site is built by histidine 55, histidine 57, aspartate 59, histidine 60, histidine 132, aspartate 153, and histidine 389.

This sequence belongs to the metallo-beta-lactamase superfamily. RNA-metabolizing metallo-beta-lactamase-like family. Forms homodimers on heating to 60 degrees Celsius which may be the active form. The cofactor is Zn(2+).

With respect to regulation, inhibited by imidazole. In terms of biological role, a 5'-3' exoribonuclease with a strong reference for 5'-monophosphorylated RNA and no endoribonuclease activty. The protein is RNase J-like protein of Methanocaldococcus jannaschii (strain ATCC 43067 / DSM 2661 / JAL-1 / JCM 10045 / NBRC 100440) (Methanococcus jannaschii).